Consider the following 282-residue polypeptide: MAGAGLIGIRRRIKSVTNIRKITKAMGLVSTAKLRKARVNLEINKKYYNEYKIILKDIINFIEDRNIYIDGNGSHKKLYVIFTSDSGLCGSFNINIINNVINEIKEDKENSLVIVIGQKGRMYLKKLGINTLAEYIEIPDVPTTKEARTIAKNIIKLYSSKEVGEVFLVYSEFYSPVKQQVLINKILPFTKENKSDNKYIEFNPPVTRFMDEILENYLKATILNCFSNSKASENGSRMTAMNGATDNANDLLDNLDLQFNRLRQSAITQEISEIVGGAEAQR.

The protein belongs to the ATPase gamma chain family. In terms of assembly, F-type ATPases have 2 components, CF(1) - the catalytic core - and CF(0) - the membrane proton channel. CF(1) has five subunits: alpha(3), beta(3), gamma(1), delta(1), epsilon(1). CF(0) has three main subunits: a, b and c.

It localises to the cell membrane. In terms of biological role, produces ATP from ADP in the presence of a proton gradient across the membrane. The gamma chain is believed to be important in regulating ATPase activity and the flow of protons through the CF(0) complex. The polypeptide is ATP synthase gamma chain (Clostridium botulinum (strain 657 / Type Ba4)).